We begin with the raw amino-acid sequence, 339 residues long: UDP-N-acetylenolpyruvoylglucosamine reductase (339 aa).

One can recognise an FAD-binding PCMH-type domain in the interval 19-189; it reads VDVQARLFAE…LRVRFKLSRV (171 aa). Arg166 is an active-site residue. The active-site Proton donor is Ser239. Glu335 is an active-site residue.

It belongs to the MurB family. FAD serves as cofactor.

It is found in the cytoplasm. The catalysed reaction is UDP-N-acetyl-alpha-D-muramate + NADP(+) = UDP-N-acetyl-3-O-(1-carboxyvinyl)-alpha-D-glucosamine + NADPH + H(+). The protein operates within cell wall biogenesis; peptidoglycan biosynthesis. Its function is as follows. Cell wall formation. The sequence is that of UDP-N-acetylenolpyruvoylglucosamine reductase from Pseudomonas syringae pv. syringae (strain B728a).